Reading from the N-terminus, the 110-residue chain is Nucleoid-associated protein NFA_2940 (110 aa).

It belongs to the YbaB/EbfC family. Homodimer.

It is found in the cytoplasm. The protein resides in the nucleoid. Its function is as follows. Binds to DNA and alters its conformation. May be involved in regulation of gene expression, nucleoid organization and DNA protection. This Nocardia farcinica (strain IFM 10152) protein is Nucleoid-associated protein NFA_2940.